We begin with the raw amino-acid sequence, 434 residues long: Adenylosuccinate synthetase (434 aa).

GTP contacts are provided by residues 22-28 (GDEGKGK) and 50-52 (GHT). D23 (proton acceptor) is an active-site residue. Mg(2+) contacts are provided by D23 and G50. IMP is bound by residues 23–26 (DEGK), 48–51 (NAGH), T139, R153, Q234, T249, and R313. H51 functions as the Proton donor in the catalytic mechanism. 309–315 (ATTGRKR) is a substrate binding site. GTP contacts are provided by residues R315, 341–343 (KLD), and 423–425 (SVG).

Belongs to the adenylosuccinate synthetase family. Homodimer. Mg(2+) is required as a cofactor.

It is found in the cytoplasm. The enzyme catalyses IMP + L-aspartate + GTP = N(6)-(1,2-dicarboxyethyl)-AMP + GDP + phosphate + 2 H(+). Its pathway is purine metabolism; AMP biosynthesis via de novo pathway; AMP from IMP: step 1/2. Functionally, plays an important role in the de novo pathway of purine nucleotide biosynthesis. Catalyzes the first committed step in the biosynthesis of AMP from IMP. This is Adenylosuccinate synthetase from Chlorobium phaeovibrioides (strain DSM 265 / 1930) (Prosthecochloris vibrioformis (strain DSM 265)).